Here is a 445-residue protein sequence, read N- to C-terminus: 6-phosphogluconate dehydrogenase, decarboxylating (445 aa).

Residues 1–4 (AVMG), 22–24 (NRS), 63–65 (VKA), and Asn91 each bind NADP(+). Substrate is bound by residues Asn91 and 117 to 119 (SGG). Residue Lys172 is the Proton acceptor of the active site. Position 175–176 (175–176 (HN)) interacts with substrate. Residue Glu179 is the Proton donor of the active site. Substrate-binding residues include Tyr180, Lys249, Arg276, Arg434, and His440.

Belongs to the 6-phosphogluconate dehydrogenase family. Homodimer.

The enzyme catalyses 6-phospho-D-gluconate + NADP(+) = D-ribulose 5-phosphate + CO2 + NADPH. The protein operates within carbohydrate degradation; pentose phosphate pathway; D-ribulose 5-phosphate from D-glucose 6-phosphate (oxidative stage): step 3/3. Functionally, catalyzes the oxidative decarboxylation of 6-phosphogluconate to ribulose 5-phosphate and CO(2), with concomitant reduction of NADP to NADPH. The sequence is that of 6-phosphogluconate dehydrogenase, decarboxylating (gnd) from Shigella sonnei.